The chain runs to 244 residues: DNA polymerase sliding clamp (244 aa).

The protein belongs to the PCNA family. As to quaternary structure, homotrimer. The subunits circularize to form a toroid; DNA passes through its center. Replication factor C (RFC) is required to load the toroid on the DNA.

In terms of biological role, sliding clamp subunit that acts as a moving platform for DNA processing. Responsible for tethering the catalytic subunit of DNA polymerase and other proteins to DNA during high-speed replication. The protein is DNA polymerase sliding clamp of Methanothrix thermoacetophila (strain DSM 6194 / JCM 14653 / NBRC 101360 / PT) (Methanosaeta thermophila).